Reading from the N-terminus, the 90-residue chain is U7-theraphotoxin-Hhn1a 6 (90 aa).

Positions 1 to 19 are cleaved as a signal peptide; that stretch reads MKTAIFTVVLALAVFAVLS. A propeptide spanning residues 20-50 is cleaved from the precursor; sequence FGWEANEKALSEEFTELIHEKEAASEAEARE. Intrachain disulfides connect Cys-51–Cys-65, Cys-58–Cys-70, and Cys-64–Cys-81.

This sequence belongs to the neurotoxin 10 (Hwtx-1) family. 13 (Hntx-13) subfamily. In terms of tissue distribution, expressed by the venom gland.

It is found in the secreted. Ion channel inhibitor. This is U7-theraphotoxin-Hhn1a 6 from Cyriopagopus hainanus (Chinese bird spider).